Here is a 193-residue protein sequence, read N- to C-terminus: Large ribosomal subunit protein uL18 (193 aa).

Belongs to the universal ribosomal protein uL18 family. In terms of assembly, part of the 50S ribosomal subunit. Contacts the 5S and 23S rRNAs.

Its function is as follows. This is one of the proteins that bind and probably mediate the attachment of the 5S RNA into the large ribosomal subunit, where it forms part of the central protuberance. The chain is Large ribosomal subunit protein uL18 from Methanococcus maripaludis (strain C6 / ATCC BAA-1332).